The following is a 426-amino-acid chain: MKRDDLIFDIIEKEHQRQLKGIELIASENFVSDQVMQAMGSCLTNKYAEGYPGKRYYGGCEVVDQSEQIAIDRLKEIFGAEWANVQPHSGAQANAAVFLAVLNPGDKFMGLNLAHGGHLSHGSLVNTSGIIYTPCEYNLNQETGRVDYDQMEEVALREKPKMIIGGGSAYSREWDYKRMREIADKVGAILMIDMAHPAGLIAAGLLENPVKYAHIVTSTTHKTLRGPRGGVIMMGKDFPNPWGKKTPKGEIKMMSQLLDSAVFPGVQGGPLEHVIAAKAVAFGEILQPEYKEYAKQVQKNAAILAQALIDRGFTIVSGGTDNHSMLVDLRSKYPDLTGKVAEKALVSADITVNKNMVPFDSRSAFQTSGIRLGTPAITTRGAKEDLMIEIAEMIETVLSNVENEEVIAQVRARVNETMKKYPLFAD.

Residues leucine 113 and 117–119 each bind (6S)-5,6,7,8-tetrahydrofolate; that span reads GHL. The residue at position 222 (lysine 222) is an N6-(pyridoxal phosphate)lysine. Residue 363 to 365 coordinates (6S)-5,6,7,8-tetrahydrofolate; it reads SAF.

It belongs to the SHMT family. Homodimer. Pyridoxal 5'-phosphate serves as cofactor.

It is found in the cytoplasm. The catalysed reaction is (6R)-5,10-methylene-5,6,7,8-tetrahydrofolate + glycine + H2O = (6S)-5,6,7,8-tetrahydrofolate + L-serine. The protein operates within one-carbon metabolism; tetrahydrofolate interconversion. It functions in the pathway amino-acid biosynthesis; glycine biosynthesis; glycine from L-serine: step 1/1. Functionally, catalyzes the reversible interconversion of serine and glycine with tetrahydrofolate (THF) serving as the one-carbon carrier. This reaction serves as the major source of one-carbon groups required for the biosynthesis of purines, thymidylate, methionine, and other important biomolecules. Also exhibits THF-independent aldolase activity toward beta-hydroxyamino acids, producing glycine and aldehydes, via a retro-aldol mechanism. In Bacteroides thetaiotaomicron (strain ATCC 29148 / DSM 2079 / JCM 5827 / CCUG 10774 / NCTC 10582 / VPI-5482 / E50), this protein is Serine hydroxymethyltransferase.